The primary structure comprises 512 residues: Circadian clock oscillator protein KaiC (512 aa).

2 consecutive KaiC domains span residues 1-243 (MQFP…ISIF) and 257-512 (VRVS…SSED). The ATP site is built by Gly45, Thr46, Gly47, Lys48, Thr49, Ser85, Lys220, Leu221, Arg222, Thr224, His226, Thr286, Gly287, Thr288, Gly289, Lys290, Thr291, and Leu292. Residue Thr49 participates in Mg(2+) binding. Position 291 (Thr291) interacts with Mg(2+). Position 314 (Glu314) interacts with Mg(2+). Trp327 is a binding site for ATP. Position 427 is a phosphoserine; by autocatalysis (Ser427). Thr428 bears the Phosphothreonine; by autocatalysis mark. ATP contacts are provided by Arg447, Lys453, Met454, Arg455, Ser457, His459, and Lys461.

The protein belongs to the KaiC family. Homohexamer; hexamerization is dependent on ATP-binding. The KaiABC complex composition changes during the circadian cycle to control KaiC phosphorylation. Complexes KaiC(6), KaiA(2-4):KaiC(6), KaiB(6):KaiC(6) and KaiC(6):KaiB(6):KaiA(12) are among the most important forms, many form cooperatively. KaiC interacts with SasA, activating its autokinase function and leading to RpaA activation. It depends on Mg(2+) as a cofactor. Post-translationally, phosphorylated on serine and threonine residues by autocatalysis. Has a 4 step phosphorylation cycle; the autokinase acts first on Thr-428, then Ser-427. When Ser-427 is modified KaiC switches to an autophosphatase mode, acting first on phospho-Thr-428 then phospho-Ser-427.

The enzyme catalyses L-seryl-[protein] + ATP = O-phospho-L-seryl-[protein] + ADP + H(+). It carries out the reaction L-threonyl-[protein] + ATP = O-phospho-L-threonyl-[protein] + ADP + H(+). The catalysed reaction is ATP + H2O = ADP + phosphate + H(+). With respect to regulation, the interaction with KaiA enhances its phosphorylation status, while the interaction with KaiB decreases it. Functionally, central component of the KaiABC oscillator complex, which constitutes the main circadian regulator in cyanobacteria. Complex composition changes during the circadian cycle to control KaiC phosphorylation. KaiA stimulates KaiC autophosphorylation, while KaiB sequesters KaiA, leading to KaiC autodephosphorylation. Clock output pathways impact the RpaA transcriptional regulator. KaiC enhances the autophosphorylation activity of SasA, which then transfers its phosphate group to RpaA to activate it. KaiB and KaiC together enhance the phospho-RpaA dephosphatase activity of CikA. Its function is as follows. Has a weak, temperature-independent ATPase activity; ATPase activity defines the circadian period. The phosphorylation state of KaiC modulates its ATPase activity and effects KaiB binding. The chain is Circadian clock oscillator protein KaiC from Parasynechococcus marenigrum (strain WH8102).